The sequence spans 62 residues: Conotoxin Pl168 (62 aa).

The signal sequence occupies residues M1–S21. The propeptide occupies F22–R40. 2 disulfide bridges follow: C46/C52 and C47/C61.

It belongs to the conotoxin A superfamily. In terms of processing, both Pro-53 and Pro-62 are not in cis/trans isomerization. As to expression, expressed by the venom duct.

It localises to the secreted. Probable neurotoxin with unknown target. Possibly targets ion channels. In Conus planorbis (Planorbis cone), this protein is Conotoxin Pl168.